Reading from the N-terminus, the 413-residue chain is Putative F-box protein At3g17560 (413 aa).

Residues 9–55 enclose the F-box domain; that stretch reads TKLLFDLPQDVIEEIFSKVPVTCLRRIRSTCKRLYALLKDRGFIRKH.

This is Putative F-box protein At3g17560 from Arabidopsis thaliana (Mouse-ear cress).